The following is a 180-amino-acid chain: MSRKKKSRNPGASGAPEFVVTRNRTESDVEGRLRKRAKKRKGLKTGSRNSDAEEQKRQAAAQKRDPRLGSKKKIPLIVEPVKKQTKQERRLSAEQELEMLENDAQLNVLLDRIEAGENLGTGLQKYVDEKLDRIEKLMDQLGLLEPEEDEDFTAPAVKGSRNDDDLLADFDDINFDDYKG.

Disordered regions lie at residues 1 to 90 (MSRK…QERR) and 145 to 180 (EPEEDEDFTAPAVKGSRNDDDLLADFDDINFDDYKG). Residues 23-32 (NRTESDVEGR) are compositionally biased toward basic and acidic residues. A compositionally biased stretch (basic residues) spans 33-43 (LRKRAKKRKGL). Basic and acidic residues-rich tracts occupy residues 50 to 68 (SDAEEQKRQAAAQKRDPRL) and 80 to 90 (PVKKQTKQERR). Residues 165–180 (DLLADFDDINFDDYKG) are compositionally biased toward acidic residues.

The protein belongs to the YihI family. Interacts with Der.

In terms of biological role, a GTPase-activating protein (GAP) that modifies Der/EngA GTPase function. May play a role in ribosome biogenesis. In Vibrio campbellii (strain ATCC BAA-1116), this protein is Der GTPase-activating protein YihI.